A 200-amino-acid chain; its full sequence is LexA repressor (200 aa).

Residues 28-48 (RAEIARILGFKSANAAEEHIK) constitute a DNA-binding region (H-T-H motif). Catalysis depends on for autocatalytic cleavage activity residues S118 and K155.

It belongs to the peptidase S24 family. Homodimer.

It catalyses the reaction Hydrolysis of Ala-|-Gly bond in repressor LexA.. Its function is as follows. Represses a number of genes involved in the response to DNA damage (SOS response), including recA and lexA. In the presence of single-stranded DNA, RecA interacts with LexA causing an autocatalytic cleavage which disrupts the DNA-binding part of LexA, leading to derepression of the SOS regulon and eventually DNA repair. The sequence is that of LexA repressor from Cellvibrio japonicus (strain Ueda107) (Pseudomonas fluorescens subsp. cellulosa).